A 96-amino-acid chain; its full sequence is Co-chaperonin GroES (96 aa).

The protein belongs to the GroES chaperonin family. As to quaternary structure, heptamer of 7 subunits arranged in a ring. Interacts with the chaperonin GroEL.

The protein localises to the cytoplasm. In terms of biological role, together with the chaperonin GroEL, plays an essential role in assisting protein folding. The GroEL-GroES system forms a nano-cage that allows encapsulation of the non-native substrate proteins and provides a physical environment optimized to promote and accelerate protein folding. GroES binds to the apical surface of the GroEL ring, thereby capping the opening of the GroEL channel. This chain is Co-chaperonin GroES, found in Shewanella amazonensis (strain ATCC BAA-1098 / SB2B).